The chain runs to 209 residues: Somatotropin (209 aa).

A signal peptide spans 1–22 (MGQVFLLMPVLLVAGYLSLGAA). Zn(2+) is bound at residue H38. C71 and C182 are disulfide-bonded. E191 is a binding site for Zn(2+). A disulfide bond links C199 and C207.

It belongs to the somatotropin/prolactin family.

It is found in the secreted. Growth hormone plays an important role in growth control and is involved in the regulation of several anabolic processes. Implicated as an osmoregulatory substance important for seawater adaptation. The chain is Somatotropin (gh) from Esox lucius (Northern pike).